Reading from the N-terminus, the 597-residue chain is FERM domain-containing protein 3 (597 aa).

Residues 32–312 (MRCTIRLLDD…ENQAFYKYAK (281 aa)) form the FERM domain. The disordered stretch occupies residues 383-403 (LLPSPSEQEEELPLGEGVPLP). Residues 531-551 (LLVVGLGLLLFVFPLLLLLLE) form a helical membrane-spanning segment.

Ovary-specific.

It is found in the membrane. Functionally, putative tumor suppressor gene that may be implicated in the origin and progression of lung cancer. The polypeptide is FERM domain-containing protein 3 (FRMD3) (Homo sapiens (Human)).